A 327-amino-acid chain; its full sequence is tRNA uridine(34) hydroxylase (327 aa).

The region spanning 123 to 217 (SDPEVLLVDT…YLEEVKQEES (95 aa)) is the Rhodanese domain. The active-site Cysteine persulfide intermediate is the C177.

It belongs to the TrhO family.

It carries out the reaction uridine(34) in tRNA + AH2 + O2 = 5-hydroxyuridine(34) in tRNA + A + H2O. Functionally, catalyzes oxygen-dependent 5-hydroxyuridine (ho5U) modification at position 34 in tRNAs. This chain is tRNA uridine(34) hydroxylase, found in Shewanella piezotolerans (strain WP3 / JCM 13877).